We begin with the raw amino-acid sequence, 368 residues long: N-acetylneuraminate epimerase (368 aa).

A signal peptide spans 1–19; it reads MNKTITALAILMASFAANA. 7 Kelch repeats span residues 40-84, 86-137, 139-173, 174-219, 222-265, 287-336, and 338-367; these read TVYI…AFID, NLYV…FVHN, KAYVTGGVNQNIFNGYFEDLNEAGKDSTAVDKINA, HYFD…VNKG, TWLI…VAGG, ENYQ…PWNN, and LLIIGGETAGGKAVTDSVLISVKDNKVTVQ. The active-site Proton acceptor is the E228.

The protein belongs to the NanM family. Homodimer.

Its subcellular location is the periplasm. It carries out the reaction N-acetyl-alpha-neuraminate = N-acetyl-beta-neuraminate. Functionally, converts alpha-N-acetylneuranimic acid (Neu5Ac) to the beta-anomer, accelerating the equilibrium between the alpha- and beta-anomers. Probably facilitates sialidase-negative bacteria to compete successfully for limited amounts of extracellular Neu5Ac, which is likely taken up in the beta-anomer. In addition, the rapid removal of sialic acid from solution might be advantageous to the bacterium to damp down host responses. This Escherichia coli O157:H7 protein is N-acetylneuraminate epimerase.